A 192-amino-acid polypeptide reads, in one-letter code: MAQMYFYYSAMNAGKSTTLLQSSFNYQERGMTPVIFTAALDDRYGIGKVSSRIGLQAEAQLFKADTNLYQEIAALNEVEKRHCILVDECQFLSKEQVYQLTEVVDKLHIPVLCYGLRTDFLGELFEGSKYLLSWADKLVELKTICHCGRKANMVIRTDEHGKAIKEGDQVAIGGNDRYVSVCRQHYKEALGK.

ATP contacts are provided by residues 9-16 (SAMNAGKS) and 87-90 (DECQ). Glu-88 acts as the Proton acceptor in catalysis. Positions 145, 147, 182, and 185 each coordinate Zn(2+).

This sequence belongs to the thymidine kinase family. As to quaternary structure, homotetramer.

It localises to the cytoplasm. It carries out the reaction thymidine + ATP = dTMP + ADP + H(+). This Vibrio vulnificus (strain CMCP6) protein is Thymidine kinase.